A 920-amino-acid chain; its full sequence is Nitrate reductase [NADH] (920 aa).

The interval 1-69 (MAASVENRQF…DTSDDEEDEA (69 aa)) is disordered. Over residues 60 to 69 (DTSDDEEDEA) the composition is skewed to acidic residues. Cys185 serves as a coordination point for Mo-molybdopterin. One can recognise a Cytochrome b5 heme-binding domain in the interval 534–609 (SLTFTMSEVK…LEEYRVGELI (76 aa)). Residues His569 and His592 each coordinate heme. The region spanning 663–775 (REKIPCKLIS…KGPLGHIEYM (113 aa)) is the FAD-binding FR-type domain. Residues 715–718 (RAYT), 732–736 (LVKIY), Phe737, Phe744, 749–751 (LMS), and Thr802 contribute to the FAD site.

Belongs to the nitrate reductase family. Homodimer. FAD serves as cofactor. It depends on heme as a cofactor. The cofactor is Mo-molybdopterin. In terms of tissue distribution, in cortical cells of roots grown at low nitrate concentrations, in vascular tissues of roots at high nitrate concentrations and in root apex under both conditions.

The enzyme catalyses nitrite + NAD(+) + H2O = nitrate + NADH + H(+). Functionally, nitrate reductase is a key enzyme involved in the first step of nitrate assimilation in plants, fungi and bacteria. The chain is Nitrate reductase [NADH] (NIA) from Cichorium intybus (Chicory).